A 218-amino-acid polypeptide reads, in one-letter code: MTHPIIHDLENRYTSKKYDPSKKVSQEDLAVLLEALRLSASSINSQPWKFIVIESDAAKQRMHDSFANMHQFNQPHIKACSHVILFANKLSYTRDDYDVVLSKAVADKRITEEQKEAAFASFKFVELNCDENGEHKAWTKPQAYLALGNALHTLARLNIDSTTMEGIDPELLSEIFADELKGYECHVALAIGYHHPSEDYNASLPKSRKAFEDVITIL.

Residues 12–16 (RYTSK) and asparagine 73 each bind FMN. 154 to 159 (LARLNI) lines the NAD(+) pocket. Residues 165-166 (EG) and 206-208 (KSR) each bind FMN.

The protein belongs to the nitroreductase family. As to quaternary structure, homodimer. FMN serves as cofactor.

Involved in bioluminescence. It is a good supplier of reduced flavin mononucleotide (FMNH2) to the bioluminescence reaction. Major FMN reductase. It is capable of using both NADH and NADPH as electron donors. As electron acceptor, FMN is the most effective, FAD is considerably effective, and riboflavin is the least effective. This chain is Major NAD(P)H-flavin oxidoreductase, found in Aliivibrio fischeri (Vibrio fischeri).